A 57-amino-acid polypeptide reads, in one-letter code: Potassium channel toxin alpha-KTx 26.3 (57 aa).

Positions Met-1–Ser-15 are cleaved as a signal peptide. A propeptide spanning residues Val-16–Ser-24 is cleaved from the precursor. Cystine bridges form between Cys-30–Cys-48, Cys-34–Cys-53, and Cys-38–Cys-55.

This sequence belongs to the short scorpion toxin superfamily. Potassium channel inhibitor family. Alpha-KTx 26 subfamily. In terms of tissue distribution, expressed by the venom gland.

It localises to the secreted. Its function is as follows. Recombinant toxin that reversibly inhibits the potassium current of mKv1.3/KCNA3 channel stably expressed in COS7 cells (IC(50)=150 nM). The sequence is that of Potassium channel toxin alpha-KTx 26.3 from Mesobuthus gibbosus (Mediterranean checkered scorpion).